Reading from the N-terminus, the 880-residue chain is MPSLNEIRSTFLDYFGKADHAVTPSAPLVPQNDPTLLFVNAGMVPFKNVFTGAETPAHPRAASSQKCVRAGGKHNDLDNVGYTARHHTFFEMLGNFSFGDYFKEQAILHAWTLLTAEFKLPKDKLLVTVYHTDDEAADLWKKIAGLGDDRIIRIPTSDNFWSMGDTGPCGPCSEIFFDHGPHIAGGPPGSPDEDGDRFIEIWNLVFMQFEQLAGGERISLPKPSIDTGMGLERIAAVLQGQHDNYDIDLFKALIAASVELTGVKAEGAQAPSHRVIADHLRSSSFLLADGVSPSNEGRGYVLRRIMRRAMRHAYLLGASEPLMHRLAPTLVREMGQAYPELRRAEALIVETLRQEEERFRTTLGRGMGLLDEATANLAAGGVLDGETAFKLYDTYGFPLDLTQDAVRAKGLTVDTDAFDAAMQKQREMARANWAGSGQQGAAAAWFSIKEKAGATDFVGYETTETTGVVKAIVVDGAEVESASAGQTVEVLLDRTSFYAESGGQAGDTGVIEAHGRESRVLDTQKQAGELHVHRVELASDLKVGDQVVASVDADRRNTTRSNHSAAHLVHAALHHVLGPHVAQKGQMVDGERMRFDFSHGGPLTAEELDRIEAEVNEVIRQNVPAETKEMAPQEAIEAGAVALFGEKYGDSVRVLTLGKSLADEAKAYSVELCGGTHVARTGDIALFKIVSEQGVAAGVRRIEALTGEAARRFLLDQAGVAKALADQFKTPVAEVATRVDALIADRKRLEKELAEAKKQLALGGGGAASGPEDVNGTALIARVLDGVGGKELRGVAEEFKKQLASGVVALVGTSDGKAAVTVAVTADLTGKFSAADLAKAAVIAMGGQGAGGKADFAQGGAPDDSKAEEGLAAVKALLAG.

Zn(2+) is bound by residues histidine 563, histidine 567, cysteine 673, and histidine 677.

The protein belongs to the class-II aminoacyl-tRNA synthetase family. The cofactor is Zn(2+).

Its subcellular location is the cytoplasm. It catalyses the reaction tRNA(Ala) + L-alanine + ATP = L-alanyl-tRNA(Ala) + AMP + diphosphate. Catalyzes the attachment of alanine to tRNA(Ala) in a two-step reaction: alanine is first activated by ATP to form Ala-AMP and then transferred to the acceptor end of tRNA(Ala). Also edits incorrectly charged Ser-tRNA(Ala) and Gly-tRNA(Ala) via its editing domain. The chain is Alanine--tRNA ligase from Caulobacter vibrioides (strain ATCC 19089 / CIP 103742 / CB 15) (Caulobacter crescentus).